A 309-amino-acid chain; its full sequence is DnaJ homolog subfamily B member 7 (309 aa).

Residues 3–69 (DYYEVLGLQR…EKRDIYDKYG (67 aa)) enclose the J domain. Positions 282–309 (FSAGVKEGGKRKKKKRKEVQKKSTKRNC) are disordered. Residues 290 to 309 (GKRKKKKRKEVQKKSTKRNC) are compositionally biased toward basic residues.

Functionally, probably acts as a co-chaperone. The polypeptide is DnaJ homolog subfamily B member 7 (DNAJB7) (Homo sapiens (Human)).